We begin with the raw amino-acid sequence, 461 residues long: uncharacterized protein (461 aa).

Transmembrane regions (helical) follow at residues Gly-13–Glu-33, Ala-54–Val-74, Val-81–Leu-101, Gly-120–Met-140, Val-170–Gly-190, Tyr-211–Phe-231, Phe-256–Ile-276, Ile-286–Val-306, Ser-314–Leu-334, Phe-349–Phe-369, Thr-377–Pro-397, Ile-399–Thr-419, and Val-439–Trp-459.

Belongs to the SLC13A/DASS transporter (TC 2.A.47) family. NADC subfamily.

Its subcellular location is the cell membrane. This is an uncharacterized protein from Haemophilus influenzae (strain ATCC 51907 / DSM 11121 / KW20 / Rd).